Reading from the N-terminus, the 348-residue chain is D-alanine--D-alanine ligase (348 aa).

An ATP-grasp domain is found at lysine 132–valine 334. Residue leucine 162 to glutamate 217 participates in ATP binding. Mg(2+)-binding residues include aspartate 288, glutamate 301, and asparagine 303.

It belongs to the D-alanine--D-alanine ligase family. Mg(2+) serves as cofactor. The cofactor is Mn(2+).

It is found in the cytoplasm. The catalysed reaction is 2 D-alanine + ATP = D-alanyl-D-alanine + ADP + phosphate + H(+). It participates in cell wall biogenesis; peptidoglycan biosynthesis. Cell wall formation. In Streptococcus thermophilus (strain ATCC BAA-250 / LMG 18311), this protein is D-alanine--D-alanine ligase.